Here is a 574-residue protein sequence, read N- to C-terminus: Myo-inositol transporter FST1 (574 aa).

Topologically, residues 1–76 (MGKSRQNSTT…VQFANPKHFT (76 aa)) are cytoplasmic. A helical transmembrane segment spans residues 77–97 (WLLVAFASMGGLLSGLDQSLI). Residues 98-115 (SGANLFLPDDLGLTEHEN) are Extracellular-facing. Residues 116 to 136 (SLVNSGMPLGAVGGALLLSPA) form a helical membrane-spanning segment. Over 137 to 143 (NEYFGRK) the chain is Cytoplasmic. Residues 144–164 (GAIIISIILYTIGAALEAGSI) form a helical membrane-spanning segment. At 165-173 (NFGMIVSSR) the chain is on the extracellular side. A helical transmembrane segment spans residues 174-194 (VILGLGVGLEGGTVPVYVAET). The Cytoplasmic portion of the chain corresponds to 195 to 205 (VERRIRGNLVS). A helical membrane pass occupies residues 206–226 (LYQFNIALGEVLGYAVGAIFL). Residues 227–233 (NVPGNWR) are Extracellular-facing. A helical membrane pass occupies residues 234 to 254 (YILGSSLLFSTIMFFGMLFLP). Residues 255–330 (ESPRFLIHQK…RARRALVYAN (76 aa)) lie on the Cytoplasmic side of the membrane. The helical transmembrane segment at 331–351 (IMILLGQLTGVNAIMYYMSVL) threads the bilayer. Residues 352–363 (MNQIGFDKKESN) are Extracellular-facing. A helical membrane pass occupies residues 364 to 384 (YMSLVGGGSLLLGTIPAIFLM). Over 385-390 (ERFGRR) the chain is Cytoplasmic. The helical transmembrane segment at 391-411 (FWAITMLPGFFIGLVLIGVSY) threads the bilayer. At 412–426 (QFDVETQLQTVEGLY) the chain is on the extracellular side. A helical membrane pass occupies residues 427–447 (LSGLIIYMGFFGSYACLTWVV). At 448–465 (PSEVYPTYLRSYGMTTSD) the chain is on the cytoplasmic side. A helical membrane pass occupies residues 466-486 (ALLFLASFIVTYNFTAMQNAM). At 487 to 490 (GKTG) the chain is on the extracellular side. A helical transmembrane segment spans residues 491–511 (LALGFYGGIAFIGEIYQIFFM). Residues 512–574 (PETKNKTLEE…PKDQVQVSHA (63 aa)) lie on the Cytoplasmic side of the membrane.

Belongs to the major facilitator superfamily. Sugar transporter (TC 2.A.1.1) family.

It localises to the cell membrane. It carries out the reaction myo-inositol(out) + H(+)(out) = myo-inositol(in) + H(+)(in). Transporter for myo-inositol. Also appears to transport the polyketide mycotoxin fumonisin B1 (FB1). Does not appear to transport hexose sugars. The sequence is that of Myo-inositol transporter FST1 from Gibberella moniliformis (strain M3125 / FGSC 7600) (Maize ear and stalk rot fungus).